We begin with the raw amino-acid sequence, 174 residues long: Shikimate kinase 2 (174 aa).

12–17 (GCGKTT) lines the ATP pocket. Mg(2+)-binding residues include Thr-16 and Asp-32. Positions 34, 58, and 79 each coordinate substrate. The interval 112–126 (EAFPEEGQRPTLTGK) is LID domain. Arg-120 contacts ATP. Arg-139 is a substrate binding site. Gln-155 is an ATP binding site.

Belongs to the shikimate kinase family. AroL subfamily. As to quaternary structure, monomer. Mg(2+) is required as a cofactor.

The protein localises to the cytoplasm. It carries out the reaction shikimate + ATP = 3-phosphoshikimate + ADP + H(+). It participates in metabolic intermediate biosynthesis; chorismate biosynthesis; chorismate from D-erythrose 4-phosphate and phosphoenolpyruvate: step 5/7. Its function is as follows. Catalyzes the specific phosphorylation of the 3-hydroxyl group of shikimic acid using ATP as a cosubstrate. The protein is Shikimate kinase 2 of Enterobacter sp. (strain 638).